A 203-amino-acid chain; its full sequence is Holliday junction branch migration complex subunit RuvA (203 aa).

The tract at residues 1–63 (MIGKLSGKID…EEHIHLYGFL (63 aa)) is domain I. The segment at 64–142 (TIEEKNFFNL…KISTGAAIIN (79 aa)) is domain II. The flexible linker stretch occupies residues 143-149 (DSLNIKN). Residues 150–203 (ITSVASNEVIKALVNLGFSRFEAQNSVQGIVIQNPEISIDELIKTALKNRNAGL) form a domain III region.

The protein belongs to the RuvA family. As to quaternary structure, homotetramer. Forms an RuvA(8)-RuvB(12)-Holliday junction (HJ) complex. HJ DNA is sandwiched between 2 RuvA tetramers; dsDNA enters through RuvA and exits via RuvB. An RuvB hexamer assembles on each DNA strand where it exits the tetramer. Each RuvB hexamer is contacted by two RuvA subunits (via domain III) on 2 adjacent RuvB subunits; this complex drives branch migration. In the full resolvosome a probable DNA-RuvA(4)-RuvB(12)-RuvC(2) complex forms which resolves the HJ.

It localises to the cytoplasm. Its function is as follows. The RuvA-RuvB-RuvC complex processes Holliday junction (HJ) DNA during genetic recombination and DNA repair, while the RuvA-RuvB complex plays an important role in the rescue of blocked DNA replication forks via replication fork reversal (RFR). RuvA specifically binds to HJ cruciform DNA, conferring on it an open structure. The RuvB hexamer acts as an ATP-dependent pump, pulling dsDNA into and through the RuvAB complex. HJ branch migration allows RuvC to scan DNA until it finds its consensus sequence, where it cleaves and resolves the cruciform DNA. The protein is Holliday junction branch migration complex subunit RuvA of Rickettsia akari (strain Hartford).